Consider the following 112-residue polypeptide: Protein SMALL AUXIN UP-REGULATED RNA 10 (112 aa).

The protein belongs to the ARG7 family. As to expression, confined to the veins and petioles of rosette leaves and cauline leaves, and specifically expressed at the abaxial side of inflorescence branche; relocates to both the adaxial (Ad) and abaxial (Ab) sides of the branch in reduced red:far-red (R:FR) light, during shade. Also present in flowers.

Its subcellular location is the cell membrane. Its function is as follows. Provide a mechanistic link between auxin and plasma membrane H(+)-ATPases (PM H(+)-ATPases, e.g. AHA1 and AHA2), and triggers PM H(+)-ATPases activity by promoting phosphorylation of their C-terminal autoinhibitory domain as a result of PP2C-D subfamily of type 2C phosphatases inhibition, thus leading to the acidification of the apoplast and the facilitation of solutes and water uptake to drive cell expansion. Triggers plant growth probably by promoting cell elongation. Regulates branch angles and bending. The chain is Protein SMALL AUXIN UP-REGULATED RNA 10 from Arabidopsis thaliana (Mouse-ear cress).